The sequence spans 474 residues: Trigger factor (474 aa).

In terms of domain architecture, PPIase FKBP-type spans 174 to 261; the sequence is GDIAVVSFKG…LKDLKEKELP (88 aa). Residues 435-474 are disordered; the sequence is VKEKTTKTSKATKTSKTTKATKTASKTTKTTKTQNKKEKK. Over residues 442–467 the composition is skewed to low complexity; sequence TSKATKTSKTTKATKTASKTTKTTKT.

It belongs to the FKBP-type PPIase family. Tig subfamily.

The protein localises to the cytoplasm. It carries out the reaction [protein]-peptidylproline (omega=180) = [protein]-peptidylproline (omega=0). Involved in protein export. Acts as a chaperone by maintaining the newly synthesized protein in an open conformation. Functions as a peptidyl-prolyl cis-trans isomerase. The sequence is that of Trigger factor from Prochlorococcus marinus (strain AS9601).